The sequence spans 273 residues: Putative pyruvate, phosphate dikinase regulatory protein (273 aa).

An ADP-binding site is contributed by G149–T156.

This sequence belongs to the pyruvate, phosphate/water dikinase regulatory protein family. PDRP subfamily.

It carries out the reaction N(tele)-phospho-L-histidyl/L-threonyl-[pyruvate, phosphate dikinase] + ADP = N(tele)-phospho-L-histidyl/O-phospho-L-threonyl-[pyruvate, phosphate dikinase] + AMP + H(+). It catalyses the reaction N(tele)-phospho-L-histidyl/O-phospho-L-threonyl-[pyruvate, phosphate dikinase] + phosphate + H(+) = N(tele)-phospho-L-histidyl/L-threonyl-[pyruvate, phosphate dikinase] + diphosphate. In terms of biological role, bifunctional serine/threonine kinase and phosphorylase involved in the regulation of the pyruvate, phosphate dikinase (PPDK) by catalyzing its phosphorylation/dephosphorylation. This Rickettsia canadensis (strain McKiel) protein is Putative pyruvate, phosphate dikinase regulatory protein.